The primary structure comprises 1069 residues: Kinesin-like protein vab-8 (1069 aa).

In terms of domain architecture, Kinesin motor spans 15–325 (PLRTIPKLRL…ACKIARTRVK (311 aa)). 3 disordered regions span residues 328–374 (MGHG…LESG), 391–436 (SRTT…KSSP), and 572–598 (EQEEESMRTSTATTGGSKKDHPLRILS). 2 interaction with unc-51 regions span residues 331–517 (GRKP…KSKY) and 517–719 (YNLD…TVVD). Composition is skewed to low complexity over residues 339–364 (SSGTMDSNGSSSSFGTTTITPGGTPR) and 391–407 (SRTTSPASTTMPSTPTS). The tract at residues 403 to 877 (STPTSIRPLH…SAERDRKTSK (475 aa)) is interaction with unc-73. Positions 719-769 (DWSQIERKKEREKDAMEEEKRKEVLRERRAKLKITELEIKRERNMIDKELD) form a coiled coil. The tract at residues 786-960 (SLSPCRGGRT…RQSYSASSGY (175 aa)) is disordered. The span at 824-847 (GGSLAKLSASGASGSGPPSSPSLG) shows a compositional bias: low complexity. Positions 883–897 (SSKERRSSGSKEELQ) are enriched in basic and acidic residues. A compositionally biased stretch (low complexity) spans 906-928 (TSPKTYGGPGTSSSGRGSSAPGS). Polar residues predominate over residues 938 to 960 (TEKTANGTMPRSKRQSYSASSGY). A coiled-coil region spans residues 990–1027 (LVRQADEIRHRQWQLKKELEEAKRAIGQEEDAKMIANS).

This sequence belongs to the TRAFAC class myosin-kinesin ATPase superfamily. Kinesin family. KIF26 subfamily. As to quaternary structure, interacts with unc-51 and unc-73. In terms of processing, phosphorylated by unc-51.

It localises to the cytoplasm. The protein localises to the cytoskeleton. In terms of biological role, required for posterior migration of cells and axon growth cones during nervous system assembly. In PLM neuron, regulates innexin unc-9 gap junction turnover by suppressing unc-9 transport out of the gap junctions. This chain is Kinesin-like protein vab-8 (vab-8), found in Caenorhabditis briggsae.